The chain runs to 125 residues: Small ribosomal subunit protein uS12 (125 aa).

Aspartate 89 carries the 3-methylthioaspartic acid modification. The segment at 106–125 is disordered; the sequence is GVKDRKQSRSKYGAKRPKKA. The span at 113-125 shows a compositional bias: basic residues; it reads SRSKYGAKRPKKA.

The protein belongs to the universal ribosomal protein uS12 family. Part of the 30S ribosomal subunit. Contacts proteins S8 and S17. May interact with IF1 in the 30S initiation complex.

Its function is as follows. With S4 and S5 plays an important role in translational accuracy. In terms of biological role, interacts with and stabilizes bases of the 16S rRNA that are involved in tRNA selection in the A site and with the mRNA backbone. Located at the interface of the 30S and 50S subunits, it traverses the body of the 30S subunit contacting proteins on the other side and probably holding the rRNA structure together. The combined cluster of proteins S8, S12 and S17 appears to hold together the shoulder and platform of the 30S subunit. In Aromatoleum aromaticum (strain DSM 19018 / LMG 30748 / EbN1) (Azoarcus sp. (strain EbN1)), this protein is Small ribosomal subunit protein uS12.